The sequence spans 95 residues: MELVLVFLCSLLAPTVLASAAEKEKEMDPFHYDYQTLRIGGLVFAVVLFSVGILLILSRRCKCSFNQKPRAPGDEEAQVENLITANATEPQKAEN.

A signal peptide spans 1–18 (MELVLVFLCSLLAPTVLA). Topologically, residues 19–35 (SAAEKEKEMDPFHYDYQ) are extracellular. A helical transmembrane segment spans residues 36-58 (TLRIGGLVFAVVLFSVGILLILS). The Cytoplasmic portion of the chain corresponds to 59-95 (RRCKCSFNQKPRAPGDEEAQVENLITANATEPQKAEN).

It belongs to the FXYD family. In terms of assembly, regulatory subunit of the sodium/potassium-transporting ATPase which is composed of a catalytic alpha subunit, a non-catalytic beta subunit and an additional regulatory subunit. The regulatory subunit, a member of the FXYD protein family, modulates the enzymatic activity in a tissue- and isoform-specific way by changing affinities of the Na+/K+-ATPase toward Na(+), K(+) or ATP.

The protein resides in the cell membrane. Associates with and regulates the activity of the sodium/potassium-transporting ATPase (NKA) which catalyzes the hydrolysis of ATP coupled with the exchange of Na(+) and K(+) ions across the plasma membrane. Reduces the apparent affinity for intracellular Na(+) with no change in the apparent affinity for extracellular K(+). In addition to modulating NKA kinetics, may also function as a regulator of NKA localization to the plasma membrane. The chain is FXYD domain-containing ion transport regulator 6 (FXYD6) from Pongo abelii (Sumatran orangutan).